The following is an 869-amino-acid chain: Alanine--tRNA ligase (869 aa).

Zn(2+) is bound by residues histidine 559, histidine 563, cysteine 660, and histidine 664.

Belongs to the class-II aminoacyl-tRNA synthetase family. Zn(2+) is required as a cofactor.

It localises to the cytoplasm. The catalysed reaction is tRNA(Ala) + L-alanine + ATP = L-alanyl-tRNA(Ala) + AMP + diphosphate. Functionally, catalyzes the attachment of alanine to tRNA(Ala) in a two-step reaction: alanine is first activated by ATP to form Ala-AMP and then transferred to the acceptor end of tRNA(Ala). Also edits incorrectly charged Ser-tRNA(Ala) and Gly-tRNA(Ala) via its editing domain. This Herminiimonas arsenicoxydans protein is Alanine--tRNA ligase.